The sequence spans 124 residues: Small ribosomal subunit protein bS6 (124 aa).

The segment at glutamate 96–alanine 124 is disordered. A compositionally biased stretch (low complexity) spans alanine 114–alanine 124.

The protein belongs to the bacterial ribosomal protein bS6 family.

Functionally, binds together with bS18 to 16S ribosomal RNA. The chain is Small ribosomal subunit protein bS6 from Burkholderia lata (strain ATCC 17760 / DSM 23089 / LMG 22485 / NCIMB 9086 / R18194 / 383).